The primary structure comprises 402 residues: Phosphoglycerate kinase (402 aa).

Substrate contacts are provided by residues 24 to 26, Arg-40, 63 to 66, Arg-122, and Arg-155; these read DFN and HFGR. ATP-binding positions include Lys-206, Gly-297, Glu-328, and 357 to 360; that span reads GGDS.

Belongs to the phosphoglycerate kinase family. As to quaternary structure, monomer.

It is found in the cytoplasm. The catalysed reaction is (2R)-3-phosphoglycerate + ATP = (2R)-3-phospho-glyceroyl phosphate + ADP. Its pathway is carbohydrate degradation; glycolysis; pyruvate from D-glyceraldehyde 3-phosphate: step 2/5. This is Phosphoglycerate kinase from Synechococcus sp. (strain RCC307).